The primary structure comprises 606 residues: Zinc finger protein 652 (606 aa).

S57 carries the post-translational modification Phosphoserine. Positions 71-97 (HLHETEEQPYFRETRAVSDVHAVKEDR) are enriched in basic and acidic residues. Disordered stretches follow at residues 71–113 (HLHE…VSYK) and 130–235 (VSKG…APVQ). The segment covering 98-109 (ENSDDTEEEEEE) has biased composition (acidic residues). S100 carries the phosphoserine modification. T103 bears the Phosphothreonine mark. The segment covering 137-149 (VSSQSKETPVLKT) has biased composition (polar residues). Over residues 152 to 170 (EEEEEESEEEATDDSNDYG) the composition is skewed to acidic residues. The segment covering 171–183 (ENEKQKKKEKIVE) has biased composition (basic and acidic residues). A compositionally biased stretch (low complexity) spans 184–209 (KVSVTQRRTRRAASVAAATTSPTPRT). Residues S197 and S204 each carry the phosphoserine modification. A C2H2-type 1 zinc finger spans residues 245–268 (LTCEKCPRVFNTRWYLEKHMNVTH). The C2H2-type 2; degenerate zinc finger occupies 272–294 (QICDKCGKKFVLESELSLHQQTD). 6 C2H2-type zinc fingers span residues 299-322 (IQCV…KIVH), 329-351 (FSCE…MVAH), 357-379 (FTCE…SLQH), 385-407 (FRCE…MSIH), 413-435 (FMCQ…MKTH), and 441-463 (FICE…RRTH). A C2H2-type 9; degenerate zinc finger spans residues 469–492 (YPCDVCGQRFRFSNMLKAHKEKCF). A mediates interaction with CBFA2T3 region spans residues 498 to 606 (VNVPPAVQIP…AEKNSSAQHH (109 aa)).

This sequence belongs to the krueppel C2H2-type zinc-finger protein family. As to quaternary structure, interacts with CBFA2T3. As to expression, widely expressed with higher expression in breast, prostate, vulva and pancreas.

Its subcellular location is the nucleus. Its function is as follows. Functions as a transcriptional repressor. The chain is Zinc finger protein 652 (ZNF652) from Homo sapiens (Human).